A 608-amino-acid polypeptide reads, in one-letter code: Mitochondrial import receptor subunit TOM70 (608 aa).

N-acetylalanine is present on Ala-2. Residues 2–38 (AASKPVEAAVVAAAVPSSGSGVGGGGTAGPGTGGLPR) lie on the Mitochondrial intermembrane side of the membrane. The chain crosses the membrane as a helical span at residues 39 to 59 (WQLALAVGAPLLLGAGAIYLW). At 60–608 (SRQQRRREAR…KKYGLKPPTL (549 aa)) the chain is on the cytoplasmic side. The interval 67–107 (EARGRGDASGLKRNSERKTPEGRASPAPGSGHPEGPGAHLD) is disordered. An Omega-N-methylarginine modification is found at Arg-71. Residues Ser-91, Ser-96, and Ser-110 each carry the phosphoserine modification. 2 TPR repeats span residues 114–147 (AQAA…CPTE) and 153–186 (STFY…NPKY). Position 185 is an N6-acetyllysine (Lys-185). Lys-275 participates in a covalent cross-link: Glycyl lysine isopeptide (Lys-Gly) (interchain with G-Cter in SUMO2). 8 TPR repeats span residues 294 to 327 (ENSG…EGKY), 329 to 362 (AEAL…KEAN), 367 to 400 (ANAL…DPQN), 401 to 434 (ADVY…RPES), 440 to 475 (QKCF…FPRC), 476 to 509 (AEGY…EPDN), 511 to 544 (TTYV…DNKC), and 545 to 578 (DFAY…AKSE). Ser-434 is modified (phosphoserine).

This sequence belongs to the Tom70 family. Forms part of the preprotein translocase complex of the outer mitochondrial membrane (TOM complex) which consists of at least 7 different proteins (TOMM5, TOMM6, TOMM7, TOMM20, TOMM22, TOMM40 and TOMM70). Interacts with CAPN8. Interacts with TRADD, TRAF6 and STING. Interacts with MAVS; the interaction is enhanced by Sendai virus infection. Interacts with HSPA8 and HSP90AA1; both interactions are required for preprotein mitochondrial import. The interaction with HSP90AA1 is direct and mediates the association of TOMM70 with IRF3 and TBK1. Upon mitochondrial depolarization, interacts with PINK1; the interaction is required for PINK1-TOM-TIM23 supercomplex formation which is critical for PINK1 stabilization at the outer mitochondrial membrane, kinase activation and downstream mitophagy. In terms of assembly, (Microbial infection) Interacts (via C-terminus) with SARS coronaviru/SARS-CoV and SARS coronavirus-2/SARS-CoV-2 virus protein ORF9b. As to quaternary structure, (Microbial infection) Interacts with parasite T.gondii RH strain MAF1b1; the interaction impairs TOMM70 import activity, enables the parasite to associate with the host mitochondria and facilitates the association of MAF1b1 with MIB complex component SAMM50, promoting the formation of SPOTs (structures positive for outer mitochondrial membrane (OMM)); the interaction is probably indirect.

The protein localises to the mitochondrion outer membrane. Acts as a receptor of the preprotein translocase complex of the outer mitochondrial membrane (TOM complex). Recognizes and mediates the translocation of mitochondrial preproteins from the cytosol into the mitochondria in a chaperone dependent manner. Mediates TBK1 and IRF3 activation induced by MAVS in response to Sendai virus infection and promotes host antiviral responses during virus infection. Upon Sendai virus infection, recruits HSP90AA1:IRF3:BAX in mitochondrion and the complex induces apoptosis. This is Mitochondrial import receptor subunit TOM70 from Homo sapiens (Human).